A 48-amino-acid chain; its full sequence is DNA-directed RNA polymerase subunit Rpo12 (48 aa).

Cys9, Cys26, and Cys29 together coordinate Zn(2+).

The protein belongs to the archaeal Rpo12/eukaryotic RPC10 RNA polymerase subunit family. Part of the RNA polymerase complex. It depends on Zn(2+) as a cofactor.

The protein resides in the cytoplasm. It catalyses the reaction RNA(n) + a ribonucleoside 5'-triphosphate = RNA(n+1) + diphosphate. In terms of biological role, DNA-dependent RNA polymerase (RNAP) catalyzes the transcription of DNA into RNA using the four ribonucleoside triphosphates as substrates. This is DNA-directed RNA polymerase subunit Rpo12 from Saccharolobus islandicus (strain Y.N.15.51 / Yellowstone #2) (Sulfolobus islandicus).